A 411-amino-acid chain; its full sequence is Translation initiation factor 2 subunit gamma (411 aa).

Positions 9–203 (QAEVNIGMVG…AIEDFIPTPK (195 aa)) constitute a tr-type G domain. Residues 18–25 (GHVDHGKT) form a G1 region. Mg(2+) contacts are provided by Asp-21, Thr-25, Gly-46, and Thr-48. 21-26 (DHGKTT) serves as a coordination point for GTP. The interval 46–50 (GITIK) is G2. Residues Cys-61, Cys-64, Cys-73, and Cys-76 each contribute to the Zn(2+) site. A G3 region spans residues 90–93 (DAPG). Residues 146–149 (NKIE) and 181–183 (SAL) contribute to the GTP site. The interval 146–149 (NKIE) is G4. Residues 181–183 (SAL) form a G5 region.

Belongs to the TRAFAC class translation factor GTPase superfamily. Classic translation factor GTPase family. EIF2G subfamily. As to quaternary structure, heterotrimer composed of an alpha, a beta and a gamma chain. Mg(2+) serves as cofactor.

The catalysed reaction is GTP + H2O = GDP + phosphate + H(+). EIF-2 functions in the early steps of protein synthesis by forming a ternary complex with GTP and initiator tRNA. The chain is Translation initiation factor 2 subunit gamma from Pyrococcus horikoshii (strain ATCC 700860 / DSM 12428 / JCM 9974 / NBRC 100139 / OT-3).